The following is a 328-amino-acid chain: Zinc finger Ran-binding domain-containing protein 2 (328 aa).

The residue at position 9 (serine 9) is a Phosphoserine. A RanBP2-type 1 zinc finger spans residues 9 to 40 (SDGDWICPDKKCGNVNFARRTSCNRCGREKTT). An N6-acetyllysine mark is found at lysine 18, lysine 54, and lysine 92. The RanBP2-type 2 zinc finger occupies 65–94 (SANDWQCKTCSNVNWARRSECNMCNTPKYA). The tract at residues 117 to 328 (REESDGEYDE…SGSRSSSKKK (212 aa)) is disordered. 5 positions are modified to phosphoserine: serine 120, serine 153, serine 181, serine 188, and serine 193. The span at 150–163 (DKESEGEEEDEDED) shows a compositional bias: acidic residues. The tract at residues 151 to 328 (KESEGEEEDE…SGSRSSSKKK (178 aa)) is required for nuclear targeting. A compositionally biased stretch (basic residues) spans 196–210 (KKSNRRSRSKSRSSH). Low complexity-rich tracts occupy residues 211-224 (SRSS…SSSR) and 232-242 (RSSSSSQSRSR). Composition is skewed to basic residues over residues 251–271 (SRGS…RKRS) and 297–312 (KKRR…HHRS). The segment covering 313 to 328 (SSGSSHSGSRSSSKKK) has biased composition (low complexity).

This sequence belongs to the ZRANB2 family. As to quaternary structure, interacts with the C-terminal half of SNRNP70, the Arg/Ser-rich domain of AKAP17A as well as with U2AF1 and CLK1.

It is found in the nucleus. Functionally, splice factor required for alternative splicing of TRA2B/SFRS10 transcripts. Binds to ssRNA containing the consensus sequence 5'-AGGUAA-3'. May interfere with constitutive 5'-splice site selection. The protein is Zinc finger Ran-binding domain-containing protein 2 (ZRANB2) of Sus scrofa (Pig).